A 386-amino-acid polypeptide reads, in one-letter code: Phosphoglycerate kinase (386 aa).

Substrate contacts are provided by residues 21–23 (DLN), Arg-36, 59–62 (HLGR), Arg-113, and Arg-146. ATP-binding positions include Lys-197, Glu-314, and 340-343 (GGDT).

It belongs to the phosphoglycerate kinase family. In terms of assembly, monomer.

The protein resides in the cytoplasm. It catalyses the reaction (2R)-3-phosphoglycerate + ATP = (2R)-3-phospho-glyceroyl phosphate + ADP. It functions in the pathway carbohydrate degradation; glycolysis; pyruvate from D-glyceraldehyde 3-phosphate: step 2/5. This is Phosphoglycerate kinase from Vibrio campbellii (strain ATCC BAA-1116).